The chain runs to 1023 residues: Exportin-T (1023 aa).

It belongs to the exportin family.

The protein resides in the nucleus. It is found in the cytoplasm. Its function is as follows. tRNA nucleus export receptor which facilitates tRNA translocation across the nuclear pore complex. Involved in pre-tRNA splicing, probably by affecting the interaction of pre-tRNA with splicing endonuclease. This Sclerotinia sclerotiorum (strain ATCC 18683 / 1980 / Ss-1) (White mold) protein is Exportin-T (los1).